The sequence spans 322 residues: Replication factor C small subunit 2 (322 aa).

44 to 51 (GPPGTGKT) lines the ATP pocket.

It belongs to the activator 1 small subunits family. RfcS subfamily. Heteromultimer composed of small subunits (RfcS) and large subunits (RfcL).

In terms of biological role, part of the RFC clamp loader complex which loads the PCNA sliding clamp onto DNA. This Pyrobaculum arsenaticum (strain DSM 13514 / JCM 11321 / PZ6) protein is Replication factor C small subunit 2.